The primary structure comprises 443 residues: Frizzled/smoothened-like sans CRD protein E (443 aa).

Positions 1–23 (MISHIKKFINLYTIVFLLYILYS) are cleaved as a signal peptide. The Extracellular segment spans residues 24 to 83 (NENFFVKGQKLPPGFCPSPLIYRNTTDRQSDIDIGFQFLGETNCVQPCPSLILTENEWNK). Asparagine 47 carries N-linked (GlcNAc...) asparagine glycosylation. The chain crosses the membrane as a helical span at residues 84 to 104 (VFNMSLVAGTISMFALIFLII). At 105–120 (TYSPLVNNIKDYTRHT) the chain is on the cytoplasmic side. Residues 121-141 (VGILFLFSGILIAMTTDGRQL) traverse the membrane as a helical segment. The Extracellular portion of the chain corresponds to 142-166 (WDIDLGFKKYCPEPGRFARQSDSKC). A helical transmembrane segment spans residues 167-187 (LVTAIFFQFGCVTALLWWAAI). Residues 188 to 203 (SVDLWITIKKIKISKK) are Cytoplasmic-facing. The helical transmembrane segment at 204 to 224 (LFIIYTIAVNIVTIVLTFGPV) threads the bilayer. At 225-248 (GSKQYGYIDAAIGCWLMDLKYQVG) the chain is on the extracellular side. The chain crosses the membrane as a helical span at residues 249-269 (YFWAPVGFCLCVGCVSIVLIL). Topologically, residues 270-289 (KEIYNVSDAVKKKLLAKHLK) are cytoplasmic. Residues 290 to 310 (PLMLIILMLTEFIYMFIFYSY) form a helical membrane-spanning segment. Residues 311 to 350 (TTSKKNHYHDIIEEYVVCLFVHAANPSVCKIGSTISPSAH) are Extracellular-facing. A helical transmembrane segment spans residues 351–371 (FFFHLCIRLMGLEVLIFYGFT). The Cytoplasmic segment spans residues 372 to 443 (RQTRKIWMRS…SGIDDSKHDP (72 aa)). 2 stretches are compositionally biased toward low complexity: residues 397-410 (SSSNDSKSSNNKTS) and 419-432 (ESSEQSNEPEQSIE). The interval 397-443 (SSSNDSKSSNNKTSGRVTGGFGESSEQSNEPEQSIELSGIDDSKHDP) is disordered.

It belongs to the G-protein coupled receptor Fz/Smo family.

The protein localises to the membrane. The polypeptide is Frizzled/smoothened-like sans CRD protein E (fscE) (Dictyostelium discoideum (Social amoeba)).